Reading from the N-terminus, the 411-residue chain is Secretion apparatus protein BsaZ (411 aa).

4 helical membrane passes run 28-48 (IVALIVIATGALAAPALVDLT), 80-100 (IAAPFVLLCAAAGALPSLVQS), 137-157 (ALLYVGVFALTVRVFAGLYHA), and 175-195 (IVLTVRLVLLFLLCALPVLIL). The interval 341 to 411 (AANRGGPPPE…APARTGDQNA (71 aa)) is disordered. Over residues 370-404 (DACADNAFPDDAPPGAAAPNAGSPDGPAPDGGAPA) the composition is skewed to low complexity.

Belongs to the type III secretion exporter family.

Its subcellular location is the cell membrane. In terms of biological role, part of the bsa type III secretion system, is involved in the intracellular replication of invading bacteria inside the host cell. Probably necessary for the lysis of the vacuole membrane and escape into the host cell cytoplasm. This is Secretion apparatus protein BsaZ (bsaZ) from Burkholderia pseudomallei (strain 1710b).